A 405-amino-acid polypeptide reads, in one-letter code: Argininosuccinate synthase (405 aa).

Residues 12 to 20 (AYSGGLDTS) and alanine 40 contribute to the ATP site. L-citrulline is bound by residues tyrosine 92 and serine 97. Residue glycine 122 coordinates ATP. Residues threonine 124, asparagine 128, and aspartate 129 each contribute to the L-aspartate site. Position 128 (asparagine 128) interacts with L-citrulline. L-citrulline-binding residues include arginine 132, serine 181, serine 190, glutamate 266, and tyrosine 278.

The protein belongs to the argininosuccinate synthase family. Type 1 subfamily. In terms of assembly, homotetramer.

It is found in the cytoplasm. The catalysed reaction is L-citrulline + L-aspartate + ATP = 2-(N(omega)-L-arginino)succinate + AMP + diphosphate + H(+). Its pathway is amino-acid biosynthesis; L-arginine biosynthesis; L-arginine from L-ornithine and carbamoyl phosphate: step 2/3. In Edwardsiella ictaluri (strain 93-146), this protein is Argininosuccinate synthase.